The chain runs to 31 residues: Nemertide alpha-4 (31 aa).

3 disulfides stabilise this stretch: Cys2/Cys16, Cys9/Cys20, and Cys15/Cys26. 2 positions are modified to 4-hydroxyproline: Pro28 and Pro29.

It belongs to the nemertide family. Confined to the epidermis and to the mucus layer.

The protein localises to the secreted. Its function is as follows. Potent toxin, demonstrating strong inhibitory effects on insect sodium channels (Nav) and reduced activity on mammalian sodium channels. Potently inhibits inactivation of insect sodium channels of B.germanica (BgNav1) (EC(50)=11.1 nM). Also delays the inactivation of most mammalian Nav (human Nav1.1/SCN1A; EC(50)=92 nM, rat Nav1.2/SCN2A; EC(50)=134.2 nM, rat Nav1.3/SCN3A; EC(50)=12.9 nM, rat Nav1.4/SCN4A; EC(50)=14.6 nM, human Nav1.5/SCN5A; EC(50)=27.8 nM, mouse Nav1.6/SCN8A; EC(50)=123.6 nM, human Nav1.9/SCN9A; EC(50)=80.5 nM). Inactivation is completely prevented by a concentration of 1 uM, resulting in sustained, non-inactivating currents. In addition, the toxin significantly enhances the recovery from inactivation, and the open state is not required for the toxin to interact with the channel. In vivo, injection into brine shrimp (Artemia salina) stops movement or causes death after 24 hours (EC(50)=0.4 uM). The sequence is that of Nemertide alpha-4 from Lineus sanguineus (Ribbon worm).